The primary structure comprises 603 residues: Geraniol synthase, chloroplastic (603 aa).

A chloroplast-targeting transit peptide spans Met-1 to Ser-35. 5 residues coordinate (2E)-geranyl diphosphate: Arg-319, Asp-356, Asp-360, Arg-497, and Asp-500. Asp-356 and Asp-360 together coordinate Mg(2+). A DDXXD motif motif is present at residues Asp-356–Asp-360. 3 residues coordinate Mg(2+): Asp-500, Thr-504, and Glu-508.

It belongs to the terpene synthase family. Tpsb subfamily. In terms of assembly, monomer. The cofactor is Mg(2+). Mn(2+) is required as a cofactor.

Its subcellular location is the plastid. It is found in the chloroplast. It carries out the reaction (2E)-geranyl diphosphate + H2O = (2E)-geraniol + diphosphate. Its pathway is secondary metabolite biosynthesis; terpenoid biosynthesis. In terms of biological role, monoterpene synthase (mono-TPS) involved in the biosynthesis of monoterpenes natural products. Catalyzes the conversion of (2E)-geranyl diphosphate (GPP) into geraniol. The polypeptide is Geraniol synthase, chloroplastic (Perilla frutescens var. hirtella (Perilla citriodora)).